Reading from the N-terminus, the 3330-residue chain is Laminin subunit alpha-3 (3330 aa).

The N-terminal stretch at 1–31 (MAVALGRAPRSLPLLLTLLLLLLLRMSPSWS) is a signal peptide. The Laminin N-terminal domain maps to 40-295 (SSRSLHPPYF…SIKDISVGGR (256 aa)). Asn-139 is a glycosylation site (N-linked (GlcNAc...) asparagine). Residues 295–725 (RCVCNGHAEA…NNYYFPDLHH (431 aa)) are domain V. 27 disulfides stabilise this stretch: Cys-296–Cys-305, Cys-298–Cys-316, Cys-318–Cys-327, Cys-330–Cys-350, Cys-353–Cys-362, Cys-355–Cys-387, Cys-390–Cys-399, Cys-402–Cys-420, Cys-423–Cys-433, Cys-425–Cys-440, Cys-442–Cys-451, Cys-454–Cys-464, Cys-488–Cys-500, Cys-490–Cys-506, Cys-508–Cys-517, Cys-520–Cys-530, Cys-533–Cys-545, Cys-535–Cys-552, Cys-554–Cys-563, Cys-566–Cys-583, Cys-628–Cys-642, Cys-630–Cys-649, Cys-651–Cys-660, Cys-663–Cys-678, Cys-681–Cys-693, Cys-683–Cys-700, and Cys-702–Cys-711. 8 Laminin EGF-like domains span residues 296 to 350 (CVCN…HNEC), 353 to 420 (CNCH…LHGC), 423 to 464 (CSCD…FPFC), 488 to 530 (CDCN…FPIC), 533 to 576 (CQCS…FPYC), 582 to 625 (VCHP…PRGC), 628 to 678 (CQCH…YFGC), and 681 to 725 (CQCD…DLHH). The N-linked (GlcNAc...) asparagine glycan is linked to Asn-445. A domain IV 1 (domain IV B) region spans residues 793 to 1262 (TEAISGRITL…VAFYHNGAIP (470 aa)). Positions 1263–1462 (CECDPAGTAG…CFCFGVNTDC (200 aa)) are domain III B. 12 disulfide bridges follow: Cys-1309-Cys-1316, Cys-1311-Cys-1323, Cys-1325-Cys-1334, Cys-1337-Cys-1350, Cys-1353-Cys-1368, Cys-1355-Cys-1375, Cys-1377-Cys-1386, Cys-1389-Cys-1399, Cys-1402-Cys-1414, Cys-1404-Cys-1421, Cys-1423-Cys-1432, and Cys-1435-Cys-1450. Laminin EGF-like domains are found at residues 1309-1352 (CNCG…GCDV), 1353-1401 (CNCS…ECVP), and 1402-1452 (CSCN…GCTK). Asn-1354 carries N-linked (GlcNAc...) asparagine glycosylation. The 10-residue stretch at 1453-1462 (CFCFGVNTDC) folds into the Laminin EGF-like 12; first part domain. The Laminin IV type A domain occupies 1466–1650 (HKQRAKFVDM…SGPRAHLVEM (185 aa)). The region spanning 1651-1683 (CACPPDYTGDSCQGCRPGYYWDNKSLPVGRCVP) is the Laminin EGF-like 12; second part domain. Residues 1651 to 1818 (CACPPDYTGD…DGSPAEECDD (168 aa)) are domain III A. N-linked (GlcNAc...) asparagine glycosylation occurs at Asn-1673. Disulfide bonds link Cys-1684/Cys-1693, Cys-1686/Cys-1700, Cys-1703/Cys-1712, Cys-1715/Cys-1728, Cys-1731/Cys-1743, Cys-1733/Cys-1752, Cys-1754/Cys-1763, and Cys-1766/Cys-1781. Laminin EGF-like domains are found at residues 1684-1730 (CNCN…SCRV) and 1731-1783 (CPCP…SCQP). A Laminin EGF-like 15; truncated domain is found at 1784 to 1818 (CNCNSNGQLGPCDPLTGDCVNQEPKDGSPAEECDD). Positions 1819-2385 (CDSCVMTLLN…ARDAANKVAI (567 aa)) are domain II and I. Coiled-coil stretches lie at residues 1851-1980 (TGAL…LRSR), 2012-2057 (VENN…HENE), 2088-2165 (LLQT…GDEL), and 2211-2238 (KRAK…QQVS). Residue Asn-2159 is glycosylated (N-linked (GlcNAc...) asparagine). N-linked (GlcNAc...) asparagine glycosylation is present at Asn-2261. The Cell attachment site signature appears at 2274 to 2276 (RGD). A coiled-coil region spans residues 2318–2383 (SARREDFSKA…QQARDAANKV (66 aa)). N-linked (GlcNAc...) asparagine glycosylation is found at Asn-2332, Asn-2361, Asn-2498, Asn-2580, and Asn-2747. Laminin G-like domains follow at residues 2386–2587 (PMRF…VEPC), 2594–2756 (SDKN…TKKC), 2763–2923 (VRTA…LGGC), 2983–3147 (ALQF…VSPC), and 3154–3327 (KGIY…LNGC). Disulfide bonds link Cys-2557–Cys-2587, Cys-2733–Cys-2756, and Cys-2891–Cys-2923. An N-linked (GlcNAc...) asparagine glycan is attached at Asn-3094. The cysteines at positions 3124 and 3147 are disulfide-linked. Asn-3270 is a glycosylation site (N-linked (GlcNAc...) asparagine). Cys-3299 and Cys-3327 form a disulfide bridge.

Laminin is a complex glycoprotein, consisting of three different polypeptide chains (alpha, beta, gamma), which are bound to each other by disulfide bonds into a cross-shaped molecule comprising one long and three short arms with globules at each end. Alpha-3 is a subunit of laminin-5 (laminin-332 or epiligrin/kalinin/nicein), laminin-6 (laminin-311 or K-laminin) and laminin-7 (laminin-321 or KS-laminin). As to expression, basal membrane of the upper alimentary tract and urinary and nasal epithelia, salivary glands and teeth (both variants). Isoform A is predominantly expressed in skin, hair follicles and developing neurons of the trigeminal ganglion. Isoform B was found in bronchi, alveoli, stomach, intestinal crypts, whisker pads, CNS, telencephalic neuroectoderm, thalamus, Rathke pouch and periventricular subependymal germinal layer.

Its subcellular location is the secreted. The protein localises to the extracellular space. It localises to the extracellular matrix. The protein resides in the basement membrane. Its function is as follows. Binding to cells via a high affinity receptor, laminin is thought to mediate the attachment, migration and organization of cells into tissues during embryonic development by interacting with other extracellular matrix components. Functionally, laminin-5 is thought to be involved in (1) cell adhesion via integrin alpha-3/beta-1 in focal adhesion and integrin alpha-6/beta-4 in hemidesmosomes, (2) signal transduction via tyrosine phosphorylation of pp125-FAK and p80, (3) differentiation of keratinocytes. This Mus musculus (Mouse) protein is Laminin subunit alpha-3 (Lama3).